The following is a 330-amino-acid chain: G-protein coupled receptor 157 (330 aa).

The Extracellular portion of the chain corresponds to 1-15 (MPSPAPPTELLPWER). The helical transmembrane segment at 16–36 (AVVLLSCALSALGSGLLVATH) threads the bilayer. Over 37 to 48 (ALWPDLRSRARR) the chain is Cytoplasmic. The helical transmembrane segment at 49 to 69 (LLLFLSLADLLSAASYFYGVL) threads the bilayer. Residues 70–87 (QDFAGTSWDCVLQGALST) are Extracellular-facing. The helical transmembrane segment at 88-108 (FANTSSFFWTVAIALYLYLSI) threads the bilayer. The Cytoplasmic portion of the chain corresponds to 109-119 (VRTTRGPSTDH). Residues 120-140 (LIWAFHLISWGVPLAITVAAV) traverse the membrane as a helical segment. Topologically, residues 141-166 (SLKKIGYDASDVSVGWCWINLEAEDR) are extracellular. Residues 167–187 (VLWMLLTGKLWEMLAYILLPL) traverse the membrane as a helical segment. The Cytoplasmic portion of the chain corresponds to 188–227 (LYLLVRKHINRAHQALSEYRPICEGRQLQRGSSTSTADKK). The chain crosses the membrane as a helical span at residues 228–248 (LVLIPLIFICLRVWSTVRFVL). Residues 249-259 (TLCGSPAVQTP) are Extracellular-facing. The helical transmembrane segment at 260–280 (VLVVLHGIGNTFQGGANCIMF) threads the bilayer. Over 281-330 (VLCTRAVRTRLFSLCCCCPRPSTQSPPGAPTPPKIGESQESRRTPEVPST) the chain is Cytoplasmic. The tract at residues 301 to 330 (PSTQSPPGAPTPPKIGESQESRRTPEVPST) is disordered. Residues 317–330 (ESQESRRTPEVPST) show a composition bias toward basic and acidic residues.

It belongs to the G-protein coupled receptor 2 family. Expressed in the primary cilia of radial glial progenitors (RGPs) in the developing neocortex.

Its subcellular location is the cell projection. It localises to the cilium membrane. In terms of biological role, orphan receptor that promotes neuronal differentiation of radial glial progenitors (RGPs). The activity of this receptor is mediated by a G(q)-protein that activates a phosphatidylinositol-calcium second messenger. This Mus musculus (Mouse) protein is G-protein coupled receptor 157 (Gpr157).